The chain runs to 315 residues: Protein ADP-ribosyltransferase (315 aa).

In terms of domain architecture, Deacetylase sirtuin-type spans 13–299 (LMDEKTKQAE…TTALRNDSTT (287 aa)). Residues alanine 40, 123–126 (TNAD), and glutamine 143 contribute to the NAD(+) site. Zn(2+) contacts are provided by cysteine 151, cysteine 155, cysteine 186, and cysteine 189. NAD(+) contacts are provided by residues 238 to 240 (YTT), asparagine 264, tyrosine 268, and isoleucine 285.

It belongs to the sirtuin family. Class M subfamily. The cofactor is Zn(2+).

It catalyses the reaction L-aspartyl-[protein] + NAD(+) = 4-O-(ADP-D-ribosyl)-L-aspartyl-[protein] + nicotinamide. With respect to regulation, is inhibited by Tenovin-6 in vitro, but not by nicotinamide. Its function is as follows. Catalyzes specifically the mono-ADP-ribosylation of GcvH-L (SAV0324). This activity is dependent on prior lipoylation of the target protein. May be involved in the modulation of the response to host-derived oxidative stress. In contrast to other sirtuin classes, lacks protein deacylase activity, being unable to catalyze delipoylation, debiotinylation, deacetylation and desuccinylation of proteins. This Staphylococcus aureus (strain Mu50 / ATCC 700699) protein is Protein ADP-ribosyltransferase.